A 438-amino-acid polypeptide reads, in one-letter code: Glucosamine kinase (438 aa).

ATP is bound by residues K133, 186 to 188 (AYL), and D193. D300 provides a ligand contact to D-glucosamine. Q305, D317, and D319 together coordinate Mg(2+). Residues 405–420 (QEVREYLYAVRHLPHW) carry the Substrate specificity determinant motif motif. E409 contacts D-glucosamine.

This sequence belongs to the actinobacterial glucosamine kinase family. As to quaternary structure, monomer. The cofactor is Mg(2+).

It carries out the reaction D-glucosamine + ATP = D-glucosamine 6-phosphate + ADP + H(+). Functionally, catalyzes the ATP-dependent phosphorylation of D-glucosamine (GlcN) to D-glucosamine 6-phosphate. May be involved in the phosphorylation of acquired extracellular GlcN derived from the hydrolysis of chitosan, i.e., in the incorporation of exogenous GlcN into the bacterial GlcNAc metabolism. To a lesser extent, is also active on glucose, but is unable to phosphorylate maltose, 18 other sugars and several aminoglycoside antibiotics. This is Glucosamine kinase from Streptacidiphilus jiangxiensis.